The following is a 701-amino-acid chain: A-type ATP synthase subunit I (701 aa).

Helical transmembrane passes span 340–360 (WEIS…GLMF), 363–379 (FGNA…FYRY), 388–408 (IPKL…TGLL), 435–455 (LYNL…LLPF), 468–488 (MIFS…LGVI), 498–518 (FLFL…FIFM), 555–575 (GIVW…AILV), 583–603 (WGSA…LLLL), 612–632 (VLVF…MAYL), and 649–669 (IIIL…VVFI).

Belongs to the V-ATPase 116 kDa subunit family. As to quaternary structure, has multiple subunits with at least A(3), B(3), C, D, E, F, H, I and proteolipid K(x).

It is found in the cell membrane. Functionally, component of the A-type ATP synthase that produces ATP from ADP in the presence of a proton gradient across the membrane. In Saccharolobus solfataricus (strain ATCC 35092 / DSM 1617 / JCM 11322 / P2) (Sulfolobus solfataricus), this protein is A-type ATP synthase subunit I.